The following is a 452-amino-acid chain: Cytochrome b-c1 complex subunit 2, mitochondrial (452 aa).

The transit peptide at 1–14 (MKLLSRAGSFSRFY) directs the protein to the mitochondrion. N6-acetyllysine is present on residues lysine 65, lysine 198, and lysine 249. Serine 367 carries the phosphoserine modification.

It belongs to the peptidase M16 family. UQCRC2/QCR2 subfamily. As to quaternary structure, component of the ubiquinol-cytochrome c oxidoreductase (cytochrome b-c1 complex, complex III, CIII), a multisubunit enzyme composed of 11 subunits. The complex is composed of 3 respiratory subunits cytochrome b, cytochrome c1 and Rieske protein UQCRFS1, 2 core protein subunits UQCRC1/QCR1 and UQCRC2/QCR2, and 6 low-molecular weight protein subunits UQCRH/QCR6, UQCRB/QCR7, UQCRQ/QCR8, UQCR10/QCR9, UQCR11/QCR10 and subunit 9, the cleavage product of Rieske protein UQCRFS1. The complex exists as an obligatory dimer and forms supercomplexes (SCs) in the inner mitochondrial membrane with NADH-ubiquinone oxidoreductase (complex I, CI) and cytochrome c oxidase (complex IV, CIV), resulting in different assemblies (supercomplex SCI(1)III(2)IV(1) and megacomplex MCI(2)III(2)IV(2)). Interacts with RAB5IF. Interacts with STMP1. As to expression, expressed in the head region and flagellum of epididymal sperm.

The protein localises to the mitochondrion inner membrane. In terms of biological role, component of the ubiquinol-cytochrome c oxidoreductase, a multisubunit transmembrane complex that is part of the mitochondrial electron transport chain which drives oxidative phosphorylation. The respiratory chain contains 3 multisubunit complexes succinate dehydrogenase (complex II, CII), ubiquinol-cytochrome c oxidoreductase (cytochrome b-c1 complex, complex III, CIII) and cytochrome c oxidase (complex IV, CIV), that cooperate to transfer electrons derived from NADH and succinate to molecular oxygen, creating an electrochemical gradient over the inner membrane that drives transmembrane transport and the ATP synthase. The cytochrome b-c1 complex catalyzes electron transfer from ubiquinol to cytochrome c, linking this redox reaction to translocation of protons across the mitochondrial inner membrane, with protons being carried across the membrane as hydrogens on the quinol. In the process called Q cycle, 2 protons are consumed from the matrix, 4 protons are released into the intermembrane space and 2 electrons are passed to cytochrome c. The 2 core subunits UQCRC1/QCR1 and UQCRC2/QCR2 are homologous to the 2 mitochondrial-processing peptidase (MPP) subunits beta-MPP and alpha-MPP respectively, and they seem to have preserved their MPP processing properties. May be involved in the in situ processing of UQCRFS1 into the mature Rieske protein and its mitochondrial targeting sequence (MTS)/subunit 9 when incorporated into complex III. This chain is Cytochrome b-c1 complex subunit 2, mitochondrial (Uqcrc2), found in Rattus norvegicus (Rat).